Reading from the N-terminus, the 278-residue chain is Biotin synthase (278 aa).

The Radical SAM core domain occupies 1 to 227; that stretch reads MQIMLCAISN…QSVVMVAGGR (227 aa). Residues C16, C20, and C23 each coordinate [4Fe-4S] cluster. [2Fe-2S] cluster is bound by residues C60, C95, and C153.

Belongs to the radical SAM superfamily. Biotin synthase family. Homodimer. It depends on [4Fe-4S] cluster as a cofactor. [2Fe-2S] cluster is required as a cofactor.

The enzyme catalyses (4R,5S)-dethiobiotin + (sulfur carrier)-SH + 2 reduced [2Fe-2S]-[ferredoxin] + 2 S-adenosyl-L-methionine = (sulfur carrier)-H + biotin + 2 5'-deoxyadenosine + 2 L-methionine + 2 oxidized [2Fe-2S]-[ferredoxin]. Its pathway is cofactor biosynthesis; biotin biosynthesis; biotin from 7,8-diaminononanoate: step 2/2. Functionally, catalyzes the conversion of dethiobiotin (DTB) to biotin by the insertion of a sulfur atom into dethiobiotin via a radical-based mechanism. The chain is Biotin synthase from Campylobacter jejuni subsp. jejuni serotype O:23/36 (strain 81-176).